A 432-amino-acid chain; its full sequence is Glutamate-1-semialdehyde 2,1-aminomutase (432 aa).

N6-(pyridoxal phosphate)lysine is present on lysine 265.

This sequence belongs to the class-III pyridoxal-phosphate-dependent aminotransferase family. HemL subfamily. As to quaternary structure, homodimer. Requires pyridoxal 5'-phosphate as cofactor.

It localises to the cytoplasm. The catalysed reaction is (S)-4-amino-5-oxopentanoate = 5-aminolevulinate. Its pathway is porphyrin-containing compound metabolism; protoporphyrin-IX biosynthesis; 5-aminolevulinate from L-glutamyl-tRNA(Glu): step 2/2. The chain is Glutamate-1-semialdehyde 2,1-aminomutase from Photobacterium profundum (strain SS9).